Reading from the N-terminus, the 364-residue chain is D-alanine--D-alanine ligase (364 aa).

The ATP-grasp domain occupies 134-347 (RRLACINGLK…YPDLLDELIN (214 aa)). 167–222 (ASEFGWPLFVKPCSLGSSVGIHKANNMDELNAAVADALRYDEEILVEEFIVGREIE) contacts ATP. Residues D300, E314, and N316 each contribute to the Mg(2+) site.

This sequence belongs to the D-alanine--D-alanine ligase family. Mg(2+) serves as cofactor. It depends on Mn(2+) as a cofactor.

Its subcellular location is the cytoplasm. The catalysed reaction is 2 D-alanine + ATP = D-alanyl-D-alanine + ADP + phosphate + H(+). Its pathway is cell wall biogenesis; peptidoglycan biosynthesis. Cell wall formation. This Legionella pneumophila (strain Paris) protein is D-alanine--D-alanine ligase.